Reading from the N-terminus, the 1053-residue chain is MPKNTSLKKVLLIGSGPIQIGQAAEFDYAGSQACKAVREEGIEVVLVNSNPATIQTDPETADKVYVEPLKADIIAEIIKKEKPDGILSGMGGQTGLNLTAELYELGALEGVQILGTPLEAIYHGEDRDLFKKLMLEIGEPIPKSFILTKIEQLDEAYEEVGLPAIIRPAYTLGGAGGGVANTKEELRTIVEHGLTKSRVHQVLIEESVKGWNEIEFEVMRDAADTCIIICGMENVDPMGVHTGESVVVAPILSLTSDEFGIMRRAAIKIIRALNVQGGCNIQFAFNNGDYRVIEVNPRVSRSSALASKATGYPIARVAAKVAIGLHLDEIMNTVTGCTPACFEPAVDYVVVKVSRWPFDKFKTADRTLTTSMKSTGEVMAIGRTVEEGFKKALRSLDTDIYRHTDLNEIRMILSRPTDERFPTLFDAFRLGMTVKEVYDLTQIEPFFLEKIQNVVDIELELRDHPTEELVKTSKKFGFSNAEIRELTGWNIYKIESLVGLPTYKMVDTCSAEFPAKTPYYYSTWEQECELTQSDRKKILILGSGAIRIGQGIEFDYCTVHAVKSLREEGIEVHILNNNPETVSTDFDTSDRLYFEPMQLEDVVNILRKGDYDGVMVQFGGQNSVNLAIPIQEEIKLFGLKTKVLGTSPDNMDVAEDRNRFSVLLDQNNIPSPANGSAYSEKEAYAIANKIGYPVLVRPSYVLGGRAMELVHDELELQTYIKEAVRVSNTHPVLIDRYLDNATELDVDAVSDGETVLIGGVMEHIEEAGVHSGDSACVIPTQTLTPEQIATVKDYTRKIALSLGVVGLINIQYAIHKGTVYVLEANPRASRTVPFVSKATGLPLAKIAAKLMLGKKLADLGYQEKEISHVAVKEVLLPFSRLPGVDPILGPEMKSTGEVIGIDYDFGRAFYKASQAADNTIPLKGNVFISVTNDQKTEILPIARKLYDLGFSLYGTEGTVKFLAQNDIPMNLVRKVQEGSPNILDMIRALDVHLLINTPGDKNARADHLQIMRASIDYSIPYITTIFGAEAAVQAIESMKTNTITVEPLSHYHS.

A carboxyphosphate synthetic domain region spans residues 1–397 (MPKNTSLKKV…GFKKALRSLD (397 aa)). The ATP site is built by Arg127, Arg167, Gly173, Gly174, Glu206, Val208, Glu213, Gly239, Val240, His241, Gln282, and Glu294. The 193-residue stretch at 131–323 (KKLMLEIGEP…IARVAAKVAI (193 aa)) folds into the ATP-grasp 1 domain. 3 residues coordinate Mg(2+): Gln282, Glu294, and Asn296. Mn(2+) contacts are provided by Gln282, Glu294, and Asn296. The interval 398 to 530 (TDIYRHTDLN…YSTWEQECEL (133 aa)) is oligomerization domain. A carbamoyl phosphate synthetic domain region spans residues 531 to 919 (TQSDRKKILI…YKASQAADNT (389 aa)). The ATP-grasp 2 domain occupies 661–852 (SVLLDQNNIP…LAKIAAKLML (192 aa)). ATP is bound by residues Arg697, Arg736, Leu738, Glu743, Gly768, Val769, His770, Ser771, Gln811, and Glu823. Mg(2+) contacts are provided by Gln811, Glu823, and Asn825. Mn(2+) is bound by residues Gln811, Glu823, and Asn825. The MGS-like domain occupies 918–1053 (NTIPLKGNVF…TVEPLSHYHS (136 aa)). Residues 920 to 1053 (IPLKGNVFIS…TVEPLSHYHS (134 aa)) form an allosteric domain region.

The protein belongs to the CarB family. As to quaternary structure, composed of two chains; the small (or glutamine) chain promotes the hydrolysis of glutamine to ammonia, which is used by the large (or ammonia) chain to synthesize carbamoyl phosphate. Tetramer of heterodimers (alpha,beta)4. Mg(2+) is required as a cofactor. The cofactor is Mn(2+).

The catalysed reaction is hydrogencarbonate + L-glutamine + 2 ATP + H2O = carbamoyl phosphate + L-glutamate + 2 ADP + phosphate + 2 H(+). It carries out the reaction hydrogencarbonate + NH4(+) + 2 ATP = carbamoyl phosphate + 2 ADP + phosphate + 2 H(+). It functions in the pathway amino-acid biosynthesis; L-arginine biosynthesis; carbamoyl phosphate from bicarbonate: step 1/1. It participates in pyrimidine metabolism; UMP biosynthesis via de novo pathway; (S)-dihydroorotate from bicarbonate: step 1/3. In terms of biological role, large subunit of the glutamine-dependent carbamoyl phosphate synthetase (CPSase). CPSase catalyzes the formation of carbamoyl phosphate from the ammonia moiety of glutamine, carbonate, and phosphate donated by ATP, constituting the first step of 2 biosynthetic pathways, one leading to arginine and/or urea and the other to pyrimidine nucleotides. The large subunit (synthetase) binds the substrates ammonia (free or transferred from glutamine from the small subunit), hydrogencarbonate and ATP and carries out an ATP-coupled ligase reaction, activating hydrogencarbonate by forming carboxy phosphate which reacts with ammonia to form carbamoyl phosphate. This Methanocorpusculum labreanum (strain ATCC 43576 / DSM 4855 / Z) protein is Carbamoyl phosphate synthase large chain.